Consider the following 239-residue polypeptide: Seed lectin beta chain (239 aa).

D-glucose is bound by residues Asp88 and Gly106. Residues Glu126 and Asp128 each coordinate Mn(2+). Ca(2+) is bound by residues Asp128, Asn132, and Asp137. Mn(2+) is bound by residues Asp137 and His142. Residues Gly217 and Ala218 each coordinate D-glucose.

This sequence belongs to the leguminous lectin family. As to quaternary structure, tetramer consisting of heterodimers of alpha and beta chains.

Its function is as follows. Galactose-binding lectin. Agglutinates human erythrocytes, and requires Ca(2+) and Mn(2+) ions for full agglutinating activity. Has antifungal activity against Fusarium sp., A.niger and A.flavus. This is Seed lectin beta chain from Spatholobus parviflorus (Butea parviflora).